The primary structure comprises 275 residues: Alpha carbonic anhydrase 7 (275 aa).

The first 27 residues, 1 to 27, serve as a signal peptide directing secretion; the sequence is MVNYSSISCIFFVALFSIFTIVSISSA. Residues N3 and N96 are each glycosylated (N-linked (GlcNAc...) asparagine). The region spanning 38–272 is the Alpha-carbonic anhydrase domain; that stretch reads REFNYKKNDE…TNKRIVHLYR (235 aa). Residues C63 and C222 are joined by a disulfide bond. Catalysis depends on H104, which acts as the Proton acceptor. H130, H132, and H149 together coordinate Zn(2+). Residue 218–219 participates in substrate binding; that stretch reads TT. An N-linked (GlcNAc...) asparagine glycan is attached at N225.

The protein belongs to the alpha-class carbonic anhydrase family. Zn(2+) serves as cofactor. In terms of processing, N-glycosylated.

The protein resides in the plastid. It is found in the chloroplast stroma. The catalysed reaction is hydrogencarbonate + H(+) = CO2 + H2O. Its function is as follows. Reversible hydration of carbon dioxide. The polypeptide is Alpha carbonic anhydrase 7 (ACA7) (Arabidopsis thaliana (Mouse-ear cress)).